The chain runs to 262 residues: MNPDNDNDSLPLLTLPEQLFLLILNPETGKLPYTFVPLFHGFVGCGIAELQLMDKVIVTKQNSQSFNNNKMLIKVIDHSKTGDTFLDYILSKLSNSFAQKGLQMATAILTISVGLNKMKRITETIAQSLIKKGFIRGTLKRSVLFKNKSIYEVIDYQAKLSVESSICKVLSTPPDYPDNCLRELIILLTFKQYEDFLIKPKLMDSLISRLYHPEQCAHIKANLRLINKNFYKEPSEVHLTNDPSVKMLSLVIGGIRNAITSE.

The protein belongs to the GOLPH3/VPS74 family.

The protein localises to the golgi apparatus. It is found in the golgi stack membrane. In terms of biological role, phosphatidylinositol-4-phosphate-binding protein that links Golgi membranes to the cytoskeleton and may participate in the tensile force required for vesicle budding from the Golgi. Thereby, may play a role in Golgi membrane trafficking. May also bind to the coatomer to regulate Golgi membrane trafficking. May play a role in anterograde transport from the Golgi to the plasma membrane and regulate secretion. May be involved in vacuolar protein sorting. This Dictyostelium discoideum (Social amoeba) protein is VPS74-like protein DDB_G0288371.